The following is a 455-amino-acid chain: Aminopeptidase YwaD (455 aa).

The first 31 residues, 1–31, serve as a signal peptide directing secretion; it reads MKKLLTVMTMAVLTAGTLLLPAQSVTPAAHA. Zn(2+) is bound by residues His250, Asp262, Glu295, Asp323, and His401.

It belongs to the peptidase M28 family. M28B subfamily. In terms of assembly, monomer. Requires Zn(2+) as cofactor.

The protein localises to the secreted. It carries out the reaction Release of N-terminal Arg and Lys from oligopeptides when P1' is not Pro. Also acts on arylamides of Arg and Lys.. The enzyme catalyses Release of an N-terminal amino acid, preferentially leucine, but not glutamic or aspartic acids.. In terms of biological role, catalyzes the hydrolysis of a range of N-terminal amino acids. This Bacillus subtilis (strain 168) protein is Aminopeptidase YwaD (ywaD).